Reading from the N-terminus, the 421-residue chain is 3-oxoacyl-[acyl-carrier-protein] synthase 2 (421 aa).

The Ketosynthase family 3 (KS3) domain occupies 1–417 (MRRVVITGTG…GTNASLILRR (417 aa)). Catalysis depends on for beta-ketoacyl synthase activity residues Cys-170, His-311, and His-347.

Belongs to the thiolase-like superfamily. Beta-ketoacyl-ACP synthases family. In terms of assembly, homodimer.

It carries out the reaction a fatty acyl-[ACP] + malonyl-[ACP] + H(+) = a 3-oxoacyl-[ACP] + holo-[ACP] + CO2. The catalysed reaction is (9Z)-hexadecenoyl-[ACP] + malonyl-[ACP] + H(+) = 3-oxo-(11Z)-octadecenoyl-[ACP] + holo-[ACP] + CO2. Its pathway is lipid metabolism; fatty acid biosynthesis. In terms of biological role, involved in the type II fatty acid elongation cycle. Catalyzes the elongation of a wide range of acyl-ACP by the addition of two carbons from malonyl-ACP to an acyl acceptor. Can efficiently catalyze the conversion of palmitoleoyl-ACP (cis-hexadec-9-enoyl-ACP) to cis-vaccenoyl-ACP (cis-octadec-11-enoyl-ACP), an essential step in the thermal regulation of fatty acid composition. The chain is 3-oxoacyl-[acyl-carrier-protein] synthase 2 (fabF) from Rhizobium meliloti (strain 1021) (Ensifer meliloti).